The chain runs to 467 residues: ATP-dependent rRNA helicase rrp3 (467 aa).

Positions 1–48 (MPGVKKRKVAREAPAPAPAQESDVESSTPEQTQEPEAQEQEQEEGQSK) are disordered. The Q motif signature appears at 48-76 (KTFKELGIIEQLCEACETMGYKAPTPIQR). The region spanning 79–250 (IPLALKGRDL…RASLSNPLRV (172 aa)) is the Helicase ATP-binding domain. 92 to 99 (AETGSGKT) serves as a coordination point for ATP. Positions 198–201 (DEAD) match the DEAD box motif. The Helicase C-terminal domain occupies 262-422 (TLLQSYLFIP…EYDCPKDEVM (161 aa)). The interval 439–467 (MKDYNEKKGSRGKKFGGKRSRDEMDQEEG) is disordered.

This sequence belongs to the DEAD box helicase family. DDX47/RRP3 subfamily. In terms of assembly, interacts with the SSU processome.

The protein resides in the nucleus. It carries out the reaction ATP + H2O = ADP + phosphate + H(+). Functionally, ATP-dependent rRNA helicase required for pre-ribosomal RNA processing. Involved in the maturation of the 35S-pre-rRNA and to its cleavage to mature 18S rRNA. This chain is ATP-dependent rRNA helicase rrp3, found in Aspergillus niger (strain ATCC MYA-4892 / CBS 513.88 / FGSC A1513).